The primary structure comprises 81 residues: Costars family protein ABRACL (81 aa).

Met1 carries the post-translational modification N-acetylmethionine.

The protein belongs to the costars family.

In Mus musculus (Mouse), this protein is Costars family protein ABRACL (Abracl).